The primary structure comprises 497 residues: Bifunctional protein GlmU (497 aa).

The segment at 1–252 (MSQPSARPSA…VWEVEGANDR (252 aa)) is pyrophosphorylase. UDP-N-acetyl-alpha-D-glucosamine-binding positions include 14 to 17 (LAAG), Lys-28, Gln-86, 91 to 92 (GT), 115 to 117 (YGD), Gly-154, Glu-169, Asn-192, and Asn-250. Asp-117 provides a ligand contact to Mg(2+). Residue Asn-250 participates in Mg(2+) binding. The interval 253 to 273 (RQLSDLGRRLNERVLRHWMKE) is linker. The tract at residues 274-497 (GVTVVDPSST…AGAEGSGAQG (224 aa)) is N-acetyltransferase. UDP-N-acetyl-alpha-D-glucosamine-binding residues include Arg-355 and Lys-373. The active-site Proton acceptor is His-385. UDP-N-acetyl-alpha-D-glucosamine-binding residues include Tyr-388 and Asn-399. Acetyl-CoA contacts are provided by residues 408–409 (NY), Ser-427, and Ala-445. The segment at 473–497 (PAKRPGTSSAEAARAAGAEGSGAQG) is disordered. Positions 480–490 (SSAEAARAAGA) are enriched in low complexity.

In the N-terminal section; belongs to the N-acetylglucosamine-1-phosphate uridyltransferase family. This sequence in the C-terminal section; belongs to the transferase hexapeptide repeat family. Homotrimer. Mg(2+) serves as cofactor.

It is found in the cytoplasm. The catalysed reaction is alpha-D-glucosamine 1-phosphate + acetyl-CoA = N-acetyl-alpha-D-glucosamine 1-phosphate + CoA + H(+). The enzyme catalyses N-acetyl-alpha-D-glucosamine 1-phosphate + UTP + H(+) = UDP-N-acetyl-alpha-D-glucosamine + diphosphate. It participates in nucleotide-sugar biosynthesis; UDP-N-acetyl-alpha-D-glucosamine biosynthesis; N-acetyl-alpha-D-glucosamine 1-phosphate from alpha-D-glucosamine 6-phosphate (route II): step 2/2. It functions in the pathway nucleotide-sugar biosynthesis; UDP-N-acetyl-alpha-D-glucosamine biosynthesis; UDP-N-acetyl-alpha-D-glucosamine from N-acetyl-alpha-D-glucosamine 1-phosphate: step 1/1. The protein operates within bacterial outer membrane biogenesis; LPS lipid A biosynthesis. Its function is as follows. Catalyzes the last two sequential reactions in the de novo biosynthetic pathway for UDP-N-acetylglucosamine (UDP-GlcNAc). The C-terminal domain catalyzes the transfer of acetyl group from acetyl coenzyme A to glucosamine-1-phosphate (GlcN-1-P) to produce N-acetylglucosamine-1-phosphate (GlcNAc-1-P), which is converted into UDP-GlcNAc by the transfer of uridine 5-monophosphate (from uridine 5-triphosphate), a reaction catalyzed by the N-terminal domain. This Micrococcus luteus (strain ATCC 4698 / DSM 20030 / JCM 1464 / CCM 169 / CCUG 5858 / IAM 1056 / NBRC 3333 / NCIMB 9278 / NCTC 2665 / VKM Ac-2230) (Micrococcus lysodeikticus) protein is Bifunctional protein GlmU.